We begin with the raw amino-acid sequence, 227 residues long: ATP synthase F(0) complex subunit a (227 aa).

Helical transmembrane passes span 12-32 (PTYL…ILFP), 69-89 (WAVL…LGLL), 98-118 (QLSL…IIGM), 132-152 (EGTP…SLFI), 180-200 (FVLM…LFLL), and 202-222 (LLEI…LSLY).

This sequence belongs to the ATPase A chain family. As to quaternary structure, component of the ATP synthase complex composed at least of ATP5F1A/subunit alpha, ATP5F1B/subunit beta, ATP5MC1/subunit c (homooctomer), MT-ATP6/subunit a, MT-ATP8/subunit 8, ATP5ME/subunit e, ATP5MF/subunit f, ATP5MG/subunit g, ATP5MK/subunit k, ATP5MJ/subunit j, ATP5F1C/subunit gamma, ATP5F1D/subunit delta, ATP5F1E/subunit epsilon, ATP5PF/subunit F6, ATP5PB/subunit b, ATP5PD/subunit d, ATP5PO/subunit OSCP. ATP synthase complex consists of a soluble F(1) head domain (subunits alpha(3) and beta(3)) - the catalytic core - and a membrane F(0) domain - the membrane proton channel (subunits c, a, 8, e, f, g, k and j). These two domains are linked by a central stalk (subunits gamma, delta, and epsilon) rotating inside the F1 region and a stationary peripheral stalk (subunits F6, b, d, and OSCP). Interacts with DNAJC30; interaction is direct.

The protein localises to the mitochondrion inner membrane. The catalysed reaction is H(+)(in) = H(+)(out). In terms of biological role, subunit a, of the mitochondrial membrane ATP synthase complex (F(1)F(0) ATP synthase or Complex V) that produces ATP from ADP in the presence of a proton gradient across the membrane which is generated by electron transport complexes of the respiratory chain. ATP synthase complex consist of a soluble F(1) head domain - the catalytic core - and a membrane F(1) domain - the membrane proton channel. These two domains are linked by a central stalk rotating inside the F(1) region and a stationary peripheral stalk. During catalysis, ATP synthesis in the catalytic domain of F(1) is coupled via a rotary mechanism of the central stalk subunits to proton translocation. With the subunit c (ATP5MC1), forms the proton-conducting channel in the F(0) domain, that contains two crucial half-channels (inlet and outlet) that facilitate proton movement from the mitochondrial intermembrane space (IMS) into the matrix. Protons are taken up via the inlet half-channel and released through the outlet half-channel, following a Grotthuss mechanism. In Salmo salar (Atlantic salmon), this protein is ATP synthase F(0) complex subunit a.